We begin with the raw amino-acid sequence, 471 residues long: POU domain protein 2 (471 aa).

A compositionally biased stretch (acidic residues) spans 1 to 18 (CGKSYEEEEEEEDDELEA). 2 disordered regions span residues 1-32 (CGKSYEEEEEEEDDELEADVAQNLSSKRSARQ) and 149-238 (DQQL…PKPL). Low complexity predominate over residues 165–180 (STPLSKSPLRSPSLSP). Positions 186–196 (EPQQAQRTPPN) are enriched in polar residues. The span at 197 to 230 (SLAAAGLGLSSAVLTPNTPSMQQQQQQTMTSTTN) shows a compositional bias: low complexity. The region spanning 257–331 (EETTDLEELE…LLQKWLEDAD (75 aa)) is the POU-specific domain. Positions 362–421 (RRKKRTSIETTIRGALEQAFVLNCKPTSEEINQLSERLHMDKEVVRVWFCNRRQKEKRIN) form a DNA-binding region, homeobox.

The protein belongs to the POU transcription factor family. Class-2 subfamily.

The protein resides in the nucleus. DNA-binding regulatory protein implicated in early development. Involved in neuronal cell fate decision. May act as an octamer-dependent activator of transcription. The protein is POU domain protein 2 (pdm2) of Drosophila virilis (Fruit fly).